Consider the following 566-residue polypeptide: OTU domain-containing protein 5 (566 aa).

Disordered regions lie at residues 1 to 117 (MTIL…GDAL) and 145 to 175 (GPGH…GAGY). Residues 11 to 30 (PPDADPANEPPPPGPLPPAP) are compositionally biased toward pro residues. Positions 34-47 (AGVGVGGGGTGVGG) are enriched in gly residues. A compositionally biased stretch (pro residues) spans 63–75 (ASPPPQGPLPGPP). Ser-64 carries the phosphoserine modification. Over residues 84–97 (AVPPGAVAGPRPQQ) the composition is skewed to low complexity. Over residues 105 to 115 (GPGGPGGGPGD) the composition is skewed to gly residues. Ser-165 carries the phosphoserine modification. Tyr-175 carries the post-translational modification Phosphotyrosine. The residue at position 177 (Ser-177) is a Phosphoserine. A Phosphothreonine modification is found at Thr-195. An OTU domain is found at 213-336 (FIIKQMKEDG…NIHYNSVVNP (124 aa)). The segment at 218–224 (MKEDGAC) is cys-loop. Asp-221 is an active-site residue. Cys-224 serves as the catalytic Nucleophile. The variable-loop stretch occupies residues 273 to 283 (KRKNNCHGNHI). Ser-323 is modified (phosphoserine). The interval 324 to 329 (YHRNIH) is his-loop. Residue His-329 is part of the active site. 2 positions are modified to phosphoserine: Ser-332 and Ser-370. A disordered region spans residues 413–499 (ARQVRGPSQP…TSSQFSAGGD (87 aa)). 2 stretches are compositionally biased toward low complexity: residues 425–438 (ASAT…AASS) and 445–457 (SRSP…ASSP). Ser-447 carries the post-translational modification Phosphoserine. Thr-502 bears the Phosphothreonine mark. Position 503 is a phosphoserine (Ser-503).

The protein belongs to the peptidase C85 family. Interacts with TRAF3. Post-translationally, phosphorylation at Ser-177 is required for deubiquitinating activity. Phosphorylation at Ser-323, Ser-332 and Ser-503 by MTOR promotes its activity.

It localises to the nucleus. The catalysed reaction is Thiol-dependent hydrolysis of ester, thioester, amide, peptide and isopeptide bonds formed by the C-terminal Gly of ubiquitin (a 76-residue protein attached to proteins as an intracellular targeting signal).. Its activity is regulated as follows. Inhibited by N-ethyl-maleimide (NEM). Its function is as follows. Deubiquitinating enzyme that functions as a negative regulator of the innate immune system. Has peptidase activity towards 'Lys-48'- and 'Lys-63'-linked polyubiquitin chains. Can also cleave 'Lys-11'-linked ubiquitin chains (in vitro). Acts via TRAF3 deubiquitination and subsequent suppression of type I interferon (IFN) production. Controls neuroectodermal differentiation through cleaving 'Lys-48'-linked ubiquitin chains to counteract degradation of select chromatin regulators such as ARID1A, HDAC2 and HCF1. Acts as a positive regulator of mTORC1 and mTORC2 signaling following phosphorylation by MTOR: acts by mediating deubiquitination of BTRC, leading to its stability. This is OTU domain-containing protein 5 from Mus musculus (Mouse).